We begin with the raw amino-acid sequence, 163 residues long: ATP synthase subunit b 1 (163 aa).

A helical membrane pass occupies residues 5-25 (LDATFFAFVGLVLFLALVVYL).

It belongs to the ATPase B chain family. F-type ATPases have 2 components, F(1) - the catalytic core - and F(0) - the membrane proton channel. F(1) has five subunits: alpha(3), beta(3), gamma(1), delta(1), epsilon(1). F(0) has three main subunits: a(1), b(2) and c(10-14). The alpha and beta chains form an alternating ring which encloses part of the gamma chain. F(1) is attached to F(0) by a central stalk formed by the gamma and epsilon chains, while a peripheral stalk is formed by the delta and b chains.

It localises to the cell inner membrane. Its function is as follows. F(1)F(0) ATP synthase produces ATP from ADP in the presence of a proton or sodium gradient. F-type ATPases consist of two structural domains, F(1) containing the extramembraneous catalytic core and F(0) containing the membrane proton channel, linked together by a central stalk and a peripheral stalk. During catalysis, ATP synthesis in the catalytic domain of F(1) is coupled via a rotary mechanism of the central stalk subunits to proton translocation. Functionally, component of the F(0) channel, it forms part of the peripheral stalk, linking F(1) to F(0). The protein is ATP synthase subunit b 1 of Rhizobium etli (strain CIAT 652).